The following is a 362-amino-acid chain: Biotin synthase (362 aa).

The Radical SAM core domain occupies 70–305 (CCGNVVDLCS…QQIIRYAGGR (236 aa)). [4Fe-4S] cluster is bound by residues cysteine 88, cysteine 92, and cysteine 95. [2Fe-2S] cluster-binding residues include cysteine 133, cysteine 170, cysteine 230, and arginine 300.

Belongs to the radical SAM superfamily. Biotin synthase family. In terms of assembly, homodimer. [4Fe-4S] cluster is required as a cofactor. The cofactor is [2Fe-2S] cluster.

The catalysed reaction is (4R,5S)-dethiobiotin + (sulfur carrier)-SH + 2 reduced [2Fe-2S]-[ferredoxin] + 2 S-adenosyl-L-methionine = (sulfur carrier)-H + biotin + 2 5'-deoxyadenosine + 2 L-methionine + 2 oxidized [2Fe-2S]-[ferredoxin]. It functions in the pathway cofactor biosynthesis; biotin biosynthesis; biotin from 7,8-diaminononanoate: step 2/2. Functionally, catalyzes the conversion of dethiobiotin (DTB) to biotin by the insertion of a sulfur atom into dethiobiotin via a radical-based mechanism. The chain is Biotin synthase from Synechocystis sp. (strain ATCC 27184 / PCC 6803 / Kazusa).